A 341-amino-acid chain; its full sequence is Tetraacyldisaccharide 4'-kinase (341 aa).

T54 to T61 serves as a coordination point for ATP.

The protein belongs to the LpxK family.

The catalysed reaction is a lipid A disaccharide + ATP = a lipid IVA + ADP + H(+). It participates in glycolipid biosynthesis; lipid IV(A) biosynthesis; lipid IV(A) from (3R)-3-hydroxytetradecanoyl-[acyl-carrier-protein] and UDP-N-acetyl-alpha-D-glucosamine: step 6/6. In terms of biological role, transfers the gamma-phosphate of ATP to the 4'-position of a tetraacyldisaccharide 1-phosphate intermediate (termed DS-1-P) to form tetraacyldisaccharide 1,4'-bis-phosphate (lipid IVA). The sequence is that of Tetraacyldisaccharide 4'-kinase from Brucella suis (strain ATCC 23445 / NCTC 10510).